The chain runs to 247 residues: Adenosine 5'-phosphosulfate reductase (247 aa).

[4Fe-4S] cluster is bound by residues C133, C134, C216, and C219. The interval 222–247 (KPAPGSDPRSGRWAGQAKTECGLHAS) is disordered. C242 acts as the Nucleophile; cysteine thiosulfonate intermediate in catalysis.

It belongs to the PAPS reductase family. CysH subfamily. It depends on [4Fe-4S] cluster as a cofactor.

The protein resides in the cytoplasm. The enzyme catalyses [thioredoxin]-disulfide + sulfite + AMP + 2 H(+) = adenosine 5'-phosphosulfate + [thioredoxin]-dithiol. The protein operates within sulfur metabolism; hydrogen sulfide biosynthesis; sulfite from sulfate. In terms of biological role, catalyzes the formation of sulfite from adenosine 5'-phosphosulfate (APS) using thioredoxin as an electron donor. The sequence is that of Adenosine 5'-phosphosulfate reductase from Rhodococcus opacus (strain B4).